We begin with the raw amino-acid sequence, 668 residues long: Metastasis-associated protein MTA2 (668 aa).

Residues 1–144 (MAANMYRVGD…PVQKTLLADQ (144 aa)) form the BAH domain. Residues Ser-52 and Ser-54 each carry the phosphoserine modification. In terms of domain architecture, ELM2 spans 145–256 (GEIRVGCKFQ…KAMSTLVPQG (112 aa)). Lys-152 carries the post-translational modification N6-acetyllysine. One can recognise an SANT domain in the interval 263–315 (DEMEEWSASEAMLFEEALEKYGKDFNDIRQDFLPWKSLASIVQFYYMWKTTDR). The segment at 367–394 (CESCHTTQSAQWYAWGPPNMQCRLCASC) adopts a GATA-type; atypical zinc-finger fold. The interval 412 to 437 (GAARGTTEPHSRGHLSRPEAQSLSPY) is disordered. 2 positions are modified to phosphoserine: Ser-433 and Ser-435. Residue Lys-460 is modified to N6-acetyllysine. Residue Lys-492 forms a Glycyl lysine isopeptide (Lys-Gly) (interchain with G-Cter in SUMO2 and SUMO3); alternate linkage. Residue Lys-492 forms a Glycyl lysine isopeptide (Lys-Gly) (interchain with G-Cter in SUMO2); alternate linkage. A Glycyl lysine isopeptide (Lys-Gly) (interchain with G-Cter in SUMO2) cross-link involves residue Lys-508. Residues Lys-522 and Lys-531 each carry the N6-acetyllysine modification. At Thr-534 the chain carries Phosphothreonine. Residues Lys-559 and Lys-595 each participate in a glycyl lysine isopeptide (Lys-Gly) (interchain with G-Cter in SUMO2) cross-link. Disordered regions lie at residues 580–599 (ASGI…LNPA) and 647–668 (PPVP…VLED).

It belongs to the metastasis-associated protein family. Component of the nucleosome remodeling and deacetylase (NuRD) repressor complex, composed of core proteins MTA1, MTA2, MTA3, RBBP4, RBBP7, HDAC1, HDAC2, MBD2, MBD3, and peripherally associated proteins CDK2AP1, CDK2AP2, GATAD2A, GATAD2B, CHD3, CHD4 and CHD5. The exact stoichiometry of the NuRD complex is unknown, and some subunits such as MBD2 and MBD3, GATAD2A and GATAD2B, and CHD3, CHD4 and CHD5 define mutually exclusive NuRD complexes. Interacts with CHD3. Interacts with CHD4. Interacts with GATAD2A. Interacts with HDAC7. Interacts with MBD3. Interacts with p53/TP53. Interacts with MINT. Interacts with PIMREG. Interacts with NACC2. Interacts with ERCC6. Interacts with PWWP2B. Interacts with transcription factor BCL11A.

It localises to the nucleus. May function as a transcriptional coregulator. Acts as a component of the histone deacetylase NuRD complex which participates in the remodeling of chromatin. This is Metastasis-associated protein MTA2 (Mta2) from Mus musculus (Mouse).